Reading from the N-terminus, the 180-residue chain is Cell division protein ZapC (180 aa).

The protein belongs to the ZapC family. In terms of assembly, interacts directly with FtsZ.

The protein localises to the cytoplasm. Its function is as follows. Contributes to the efficiency of the cell division process by stabilizing the polymeric form of the cell division protein FtsZ. Acts by promoting interactions between FtsZ protofilaments and suppressing the GTPase activity of FtsZ. The chain is Cell division protein ZapC from Vibrio cholerae serotype O1 (strain ATCC 39315 / El Tor Inaba N16961).